Reading from the N-terminus, the 140-residue chain is Cysteine proteinase inhibitor 1 (140 aa).

A signal peptide spans 1 to 26 (MRKYRVAGLVAALLVLHSLATPSAQA). Residues 48–135 (GGVEPVGNEN…KELQEFKPVD (88 aa)) form the Cystatin domain. Positions 91–95 (QVVAG) match the Secondary area of contact motif.

It belongs to the cystatin family. Phytocystatin subfamily.

Its subcellular location is the secreted. In terms of biological role, there are two distinct cystatins in rice seeds (Oryzacystatin-1 and -2) with different specificities against cysteine proteinases. May be involved in the control of germination by inhibition of endogenous cysteine proteinases. May play a role in defense by inhibiting exogenous proteases such as those present in digestive tracks of insects and nematodes. The chain is Cysteine proteinase inhibitor 1 from Oryza sativa subsp. japonica (Rice).